Consider the following 497-residue polypeptide: Acetyltransferase FGR3 (497 aa).

The Ca(2+) site is built by aspartate 221 and isoleucine 224. CoA is bound by residues lysine 255 and aspartate 303. Aspartate 386 provides a ligand contact to Ca(2+). Position 396 (threonine 396) interacts with CoA. A Ca(2+)-binding site is contributed by aspartate 462. A disordered region spans residues 477–497 (DASEAKKANGTNGTNGVNGSS). Residues 485 to 497 (NGTNGTNGVNGSS) are compositionally biased toward low complexity.

The protein belongs to the trichothecene 3-O-acetyltransferase family.

It participates in secondary metabolite biosynthesis. Acetyltransferase; part of the gene cluster that mediates the biosynthesis of the tetraketides fugralins such as linear fugralin A and cyclic fugralin B, volatile compounds that play a role in the asexual reproductive cycle but are not involved in pathogenicity. One of the key features of fugralins is the presence of a double methyl group, which is only rarely encountered in fungal secondary metabolites. As the fugralins cluster does not contain an independent methyltransferase, the PKS FGR1 is probably responsible for adding two methyl groups to the same carbon atom. Fugralin B is similar to fugralin A except for a cyclization between the carboxylic acid C-8 and the alcohol on C-4 resulting in a six membered lactone ring, probably catalyzed by the cyclase FGR4. The exact role of the individual cluster genes remains unknown and further work is needed to unravel the biosynthetic pathway. The polypeptide is Acetyltransferase FGR3 (Gibberella zeae (strain ATCC MYA-4620 / CBS 123657 / FGSC 9075 / NRRL 31084 / PH-1) (Wheat head blight fungus)).